Consider the following 554-residue polypeptide: Probable ATP-binding cassette sub-family F member 3 homolog (554 aa).

2 ABC transporter domains span residues 89–285 (GDLH…ASAR) and 351–554 (IEFV…GLGV). ATP contacts are provided by residues 122-129 (GRNGIGKT) and 383-390 (GANGQGKS).

The protein belongs to the ABC transporter superfamily. ABCF family. EF3 subfamily.

The polypeptide is Probable ATP-binding cassette sub-family F member 3 homolog (Encephalitozoon cuniculi (strain GB-M1) (Microsporidian parasite)).